Reading from the N-terminus, the 262-residue chain is 14-3-3-like protein B (262 aa).

This sequence belongs to the 14-3-3 family.

The polypeptide is 14-3-3-like protein B (Hordeum vulgare (Barley)).